The chain runs to 585 residues: Zinc finger protein Eos (585 aa).

Disordered regions lie at residues 1 to 43 (MHTP…PDFL) and 68 to 98 (EKEF…SANS). Positions 25 to 34 (QGKDNLERDP) are enriched in basic and acidic residues. Residues 79–98 (SVSTPNSQHSSPSRSLSANS) show a composition bias toward polar residues. K100 is covalently cross-linked (Glycyl lysine isopeptide (Lys-Gly) (interchain with G-Cter in SUMO2)). S105 is modified (phosphoserine). 4 consecutive C2H2-type zinc fingers follow at residues 159–181 (LKCD…KRSH), 187–209 (FHCN…IKLH), 215–237 (FKCP…LRTH), and 248–271 (YKCN…ERCH). The interval 281-585 (AQALAGQPGD…HIVRGEHKVG (305 aa)) is interaction with FOXP3. At K335 the chain carries N6-acetyllysine. Positions 410–489 (PGRLELPGSR…QPPPTIVVGR (80 aa)) are disordered. Residues 425-429 (PEDLA) carry the CTBP-binding motif PEDLA motif. The span at 475–484 (QGPPPQPPPT) shows a compositional bias: pro residues. Residue K500 forms a Glycyl lysine isopeptide (Lys-Gly) (interchain with G-Cter in SUMO2) linkage. 2 consecutive C2H2-type zinc fingers follow at residues 530-552 (FKCE…MGCH) and 558-582 (FECN…RGEH).

It belongs to the Ikaros C2H2-type zinc-finger protein family. In terms of assembly, self-associates. Interacts with other family members; IKZF1, IKZF2, IKZF3 and IKZF5. Interacts with CTBP2. Interacts with SPI1, MITF, FOXP3 and CTBP1. In terms of tissue distribution, highly expressed in skeletal muscle, low levels of expression in heart, thymus, kidney, liver, and spleen. Expressed in the hematopoietic cell lines MOLT-4, NALM-6 and K-562. Highly expressed in THP-1 and M-07e cell lines, which have characteristics of myeloid and early megakaryocytic cells respectively.

It is found in the nucleus. DNA-binding protein that binds to the 5'GGGAATRCC-3' Ikaros-binding sequence. Transcriptional repressor. Interacts with SPI1 and MITF to repress transcription of the CTSK and ACP5 promoters via recruitment of corepressors SIN3A and CTBP2. May be involved in the development of central and peripheral nervous systems. Essential for the inhibitory function of regulatory T-cells (Treg). Mediates FOXP3-mediated gene silencing in regulatory T-cells (Treg) via recruitment of corepressor CTBP1. In Homo sapiens (Human), this protein is Zinc finger protein Eos (IKZF4).